We begin with the raw amino-acid sequence, 265 residues long: Thymidine kinase 2, mitochondrial (265 aa).

The transit peptide at 1-33 directs the protein to the mitochondrion; that stretch reads MLLWPLRGWAARALRCFGPGSRGSPASGPGPRR. The span at 20 to 32 shows a compositional bias: low complexity; that stretch reads GSRGSPASGPGPR. A disordered region spans residues 20–47; it reads GSRGSPASGPGPRRVQRRAWPPDKEQEK. 57–65 is a binding site for ATP; it reads GNIASGKTT. Catalysis depends on Glu133, which acts as the Proton acceptor.

It belongs to the DCK/DGK family. In terms of assembly, monomer. As to expression, predominantly expressed in liver, pancreas, muscle, and brain.

It localises to the mitochondrion. It catalyses the reaction thymidine + ATP = dTMP + ADP + H(+). It carries out the reaction 2'-deoxycytidine + ATP = dCMP + ADP + H(+). The enzyme catalyses 2'-deoxyuridine + ATP = dUMP + ADP + H(+). Phosphorylates thymidine, deoxycytidine, and deoxyuridine in the mitochondrial matrix. In non-replicating cells, where cytosolic dNTP synthesis is down-regulated, mtDNA synthesis depends solely on TK2 and DGUOK. Widely used as target of antiviral and chemotherapeutic agents. The sequence is that of Thymidine kinase 2, mitochondrial from Homo sapiens (Human).